The following is a 348-amino-acid chain: MTAETAAVDARPVASSQRVGVLLVNLGTPDALGYWPVRRYLKEFLSDRRVVNTPRLIWWPILNLIILTTRPQRSSKNYETIWNSQRNESPLKTVTRSQAEQLAGSIVSGEFGAGGDIVVDWAMRYANPSILSSLQRLREQGCGRVLIVPLYPQFAGATTLSVADKVEESLARMNWRPDMRSVPPYYNDPVYIDALAQSVRAGLAALDFEPEVVLVSFHGIPKSYVEAGDPYYDQCVETWRLLRERLDFSPERCPLTFQSRFGRAEWLSPYTDETVKELARKGVRRMAVLTPGFSVDCLETISEIGVENREFFIEAGGEQFALIPCLNDSALGMKVIRHIVSRELEGWI.

Fe cation-binding residues include histidine 218 and glutamate 299.

This sequence belongs to the ferrochelatase family.

The protein localises to the cytoplasm. It catalyses the reaction heme b + 2 H(+) = protoporphyrin IX + Fe(2+). The protein operates within porphyrin-containing compound metabolism; protoheme biosynthesis; protoheme from protoporphyrin-IX: step 1/1. Functionally, catalyzes the ferrous insertion into protoporphyrin IX. The polypeptide is Ferrochelatase (Methylocella silvestris (strain DSM 15510 / CIP 108128 / LMG 27833 / NCIMB 13906 / BL2)).